The sequence spans 376 residues: Chaperone protein DnaJ (376 aa).

A J domain is found at 5–69; the sequence is DYYEVLGVSK…QKRAQYDQYG (65 aa). A CR-type zinc finger spans residues 133–215; the sequence is GKDAEIEIPR…CHGKGRVTKT (83 aa). Zn(2+) contacts are provided by Cys-146, Cys-149, Cys-163, Cys-166, Cys-189, Cys-192, Cys-203, and Cys-206. CXXCXGXG motif repeat units lie at residues 146-153, 163-170, 189-196, and 203-210; these read CDTCHGSG, CSHCGGKG, CQYCNGTG, and CPTCHGKG.

The protein belongs to the DnaJ family. As to quaternary structure, homodimer. Zn(2+) is required as a cofactor.

Its subcellular location is the cytoplasm. Functionally, participates actively in the response to hyperosmotic and heat shock by preventing the aggregation of stress-denatured proteins and by disaggregating proteins, also in an autonomous, DnaK-independent fashion. Unfolded proteins bind initially to DnaJ; upon interaction with the DnaJ-bound protein, DnaK hydrolyzes its bound ATP, resulting in the formation of a stable complex. GrpE releases ADP from DnaK; ATP binding to DnaK triggers the release of the substrate protein, thus completing the reaction cycle. Several rounds of ATP-dependent interactions between DnaJ, DnaK and GrpE are required for fully efficient folding. Also involved, together with DnaK and GrpE, in the DNA replication of plasmids through activation of initiation proteins. The polypeptide is Chaperone protein DnaJ (Listeria monocytogenes serotype 4b (strain CLIP80459)).